An 813-amino-acid polypeptide reads, in one-letter code: Phosphoribosylformylglycinamidine synthase subunit PurL (813 aa).

His56 is an active-site residue. Positions 59 and 103 each coordinate ATP. Residue Glu105 participates in Mg(2+) binding. Residues 106-109 (SHNH) and Arg128 contribute to the substrate site. Catalysis depends on His107, which acts as the Proton acceptor. Residue Asp129 coordinates Mg(2+). Position 253 (Gln253) interacts with substrate. Asp281 contacts Mg(2+). 325–327 (ESQ) contacts substrate. The ATP site is built by Asn511 and Gly548. Asn549 lines the Mg(2+) pocket. Residue Ser551 coordinates substrate.

This sequence belongs to the FGAMS family. As to quaternary structure, monomer. Part of the FGAM synthase complex composed of 1 PurL, 1 PurQ and 2 PurS subunits.

It localises to the cytoplasm. The catalysed reaction is N(2)-formyl-N(1)-(5-phospho-beta-D-ribosyl)glycinamide + L-glutamine + ATP + H2O = 2-formamido-N(1)-(5-O-phospho-beta-D-ribosyl)acetamidine + L-glutamate + ADP + phosphate + H(+). It functions in the pathway purine metabolism; IMP biosynthesis via de novo pathway; 5-amino-1-(5-phospho-D-ribosyl)imidazole from N(2)-formyl-N(1)-(5-phospho-D-ribosyl)glycinamide: step 1/2. Its function is as follows. Part of the phosphoribosylformylglycinamidine synthase complex involved in the purines biosynthetic pathway. Catalyzes the ATP-dependent conversion of formylglycinamide ribonucleotide (FGAR) and glutamine to yield formylglycinamidine ribonucleotide (FGAM) and glutamate. The FGAM synthase complex is composed of three subunits. PurQ produces an ammonia molecule by converting glutamine to glutamate. PurL transfers the ammonia molecule to FGAR to form FGAM in an ATP-dependent manner. PurS interacts with PurQ and PurL and is thought to assist in the transfer of the ammonia molecule from PurQ to PurL. This is Phosphoribosylformylglycinamidine synthase subunit PurL from Corynebacterium jeikeium (strain K411).